The chain runs to 213 residues: Major fimbrial subunit (213 aa).

A signal peptide spans 1-20 (MKKTLLGSLILLAFAGNVQA). Cys41 and Cys81 are oxidised to a cystine.

This sequence belongs to the fimbrial protein family.

It is found in the fimbrium. In terms of biological role, mediates adherence to oropharyngeal epithelial cells. Helps the airway colonization process. The protein is Major fimbrial subunit (hifA) of Haemophilus influenzae.